The following is a 331-amino-acid chain: 4-hydroxythreonine-4-phosphate dehydrogenase (331 aa).

Substrate is bound by residues histidine 137 and threonine 138. A divalent metal cation is bound by residues histidine 167, histidine 212, and histidine 267. Substrate-binding residues include lysine 275, asparagine 284, and arginine 293.

This sequence belongs to the PdxA family. Homodimer. It depends on Zn(2+) as a cofactor. Mg(2+) is required as a cofactor. Co(2+) serves as cofactor.

The protein resides in the cytoplasm. The enzyme catalyses 4-(phosphooxy)-L-threonine + NAD(+) = 3-amino-2-oxopropyl phosphate + CO2 + NADH. It participates in cofactor biosynthesis; pyridoxine 5'-phosphate biosynthesis; pyridoxine 5'-phosphate from D-erythrose 4-phosphate: step 4/5. Its function is as follows. Catalyzes the NAD(P)-dependent oxidation of 4-(phosphooxy)-L-threonine (HTP) into 2-amino-3-oxo-4-(phosphooxy)butyric acid which spontaneously decarboxylates to form 3-amino-2-oxopropyl phosphate (AHAP). The chain is 4-hydroxythreonine-4-phosphate dehydrogenase from Yersinia pseudotuberculosis serotype I (strain IP32953).